A 278-amino-acid chain; its full sequence is Octanoyl-[GcvH]:protein N-octanoyltransferase (278 aa).

One can recognise a BPL/LPL catalytic domain in the interval 41 to 247; the sequence is LVSPPTIRTW…LLHRLAGEVH (207 aa). Cys146 (acyl-thioester intermediate) is an active-site residue.

The protein belongs to the octanoyltransferase LipL family.

It catalyses the reaction N(6)-octanoyl-L-lysyl-[glycine-cleavage complex H protein] + L-lysyl-[lipoyl-carrier protein] = N(6)-octanoyl-L-lysyl-[lipoyl-carrier protein] + L-lysyl-[glycine-cleavage complex H protein]. Its pathway is protein modification; protein lipoylation via endogenous pathway; protein N(6)-(lipoyl)lysine from octanoyl-[acyl-carrier-protein]. Functionally, catalyzes the amidotransfer (transamidation) of the octanoyl moiety from octanoyl-GcvH to the lipoyl domain of the E2 subunit of lipoate-dependent enzymes. The polypeptide is Octanoyl-[GcvH]:protein N-octanoyltransferase (Lysinibacillus sphaericus (strain C3-41)).